A 344-amino-acid polypeptide reads, in one-letter code: Holliday junction branch migration complex subunit RuvB (344 aa).

Positions 1-25 (MTDSDPTLRPDRLPEDVQATDDRAL) are enriched in basic and acidic residues. A disordered region spans residues 1–33 (MTDSDPTLRPDRLPEDVQATDDRALRPQSLDDF). The tract at residues 1-186 (MTDSDPTLRP…FGIPTRLNFY (186 aa)) is large ATPase domain (RuvB-L). Residues L25, R26, G67, K70, T71, T72, 133-135 (EDF), R176, Y186, and R223 contribute to the ATP site. T71 is a binding site for Mg(2+). The interval 187–257 (TIAELDQIVA…IADSALTRLG (71 aa)) is small ATPAse domain (RuvB-S). Residues 260 to 344 (DLGLDGADRR…PKRPDQGELI (85 aa)) form a head domain (RuvB-H) region. DNA is bound by residues R296, R315, and R320.

The protein belongs to the RuvB family. Homohexamer. Forms an RuvA(8)-RuvB(12)-Holliday junction (HJ) complex. HJ DNA is sandwiched between 2 RuvA tetramers; dsDNA enters through RuvA and exits via RuvB. An RuvB hexamer assembles on each DNA strand where it exits the tetramer. Each RuvB hexamer is contacted by two RuvA subunits (via domain III) on 2 adjacent RuvB subunits; this complex drives branch migration. In the full resolvosome a probable DNA-RuvA(4)-RuvB(12)-RuvC(2) complex forms which resolves the HJ.

It is found in the cytoplasm. The enzyme catalyses ATP + H2O = ADP + phosphate + H(+). Its function is as follows. The RuvA-RuvB-RuvC complex processes Holliday junction (HJ) DNA during genetic recombination and DNA repair, while the RuvA-RuvB complex plays an important role in the rescue of blocked DNA replication forks via replication fork reversal (RFR). RuvA specifically binds to HJ cruciform DNA, conferring on it an open structure. The RuvB hexamer acts as an ATP-dependent pump, pulling dsDNA into and through the RuvAB complex. RuvB forms 2 homohexamers on either side of HJ DNA bound by 1 or 2 RuvA tetramers; 4 subunits per hexamer contact DNA at a time. Coordinated motions by a converter formed by DNA-disengaged RuvB subunits stimulates ATP hydrolysis and nucleotide exchange. Immobilization of the converter enables RuvB to convert the ATP-contained energy into a lever motion, pulling 2 nucleotides of DNA out of the RuvA tetramer per ATP hydrolyzed, thus driving DNA branch migration. The RuvB motors rotate together with the DNA substrate, which together with the progressing nucleotide cycle form the mechanistic basis for DNA recombination by continuous HJ branch migration. Branch migration allows RuvC to scan DNA until it finds its consensus sequence, where it cleaves and resolves cruciform DNA. This Jannaschia sp. (strain CCS1) protein is Holliday junction branch migration complex subunit RuvB.